The primary structure comprises 776 residues: 5-methyltetrahydropteroyltriglutamate--homocysteine methyltransferase (776 aa).

5-methyltetrahydropteroyltri-L-glutamate-binding positions include 16–19 and K112; that span reads RELK. Residues 435-437 and E488 each bind L-homocysteine; that span reads IGS. L-methionine contacts are provided by residues 435–437 and E488; that span reads IGS. 5-methyltetrahydropteroyltri-L-glutamate contacts are provided by residues 519 to 520 and W565; that span reads RC. D603 is a binding site for L-homocysteine. D603 is an L-methionine binding site. E609 contributes to the 5-methyltetrahydropteroyltri-L-glutamate binding site. Residues H645, C647, and E669 each coordinate Zn(2+). Catalysis depends on H698, which acts as the Proton donor. C730 is a Zn(2+) binding site.

The protein belongs to the vitamin-B12 independent methionine synthase family. Zn(2+) serves as cofactor.

It catalyses the reaction 5-methyltetrahydropteroyltri-L-glutamate + L-homocysteine = tetrahydropteroyltri-L-glutamate + L-methionine. The protein operates within amino-acid biosynthesis; L-methionine biosynthesis via de novo pathway; L-methionine from L-homocysteine (MetE route): step 1/1. Catalyzes the transfer of a methyl group from 5-methyltetrahydrofolate to homocysteine resulting in methionine formation. In Ralstonia pickettii (strain 12J), this protein is 5-methyltetrahydropteroyltriglutamate--homocysteine methyltransferase.